The primary structure comprises 485 residues: Putative non-structural protein 1 (485 aa).

In Micromonas pusilla (Picoplanktonic green alga), this protein is Putative non-structural protein 1 (S7).